The following is a 348-amino-acid chain: Protein pelota homolog (348 aa).

This sequence belongs to the eukaryotic release factor 1 family. Pelota subfamily. Monomer. A divalent metal cation is required as a cofactor.

The protein localises to the cytoplasm. Functionally, may function in recognizing stalled ribosomes, interact with stem-loop structures in stalled mRNA molecules, and effect endonucleolytic cleavage of the mRNA. May play a role in the release non-functional ribosomes and degradation of damaged mRNAs. Has endoribonuclease activity. The chain is Protein pelota homolog from Methanococcus aeolicus (strain ATCC BAA-1280 / DSM 17508 / OCM 812 / Nankai-3).